Here is a 243-residue protein sequence, read N- to C-terminus: UPF0246 protein gbs2036 (243 aa).

This sequence belongs to the UPF0246 family.

The protein is UPF0246 protein gbs2036 of Streptococcus agalactiae serotype III (strain NEM316).